A 194-amino-acid chain; its full sequence is Peptidyl-tRNA hydrolase (194 aa).

Y17 serves as a coordination point for tRNA. Catalysis depends on H22, which acts as the Proton acceptor. Y68, N70, and N116 together coordinate tRNA.

Belongs to the PTH family. Monomer.

The protein resides in the cytoplasm. The catalysed reaction is an N-acyl-L-alpha-aminoacyl-tRNA + H2O = an N-acyl-L-amino acid + a tRNA + H(+). In terms of biological role, hydrolyzes ribosome-free peptidyl-tRNAs (with 1 or more amino acids incorporated), which drop off the ribosome during protein synthesis, or as a result of ribosome stalling. Catalyzes the release of premature peptidyl moieties from peptidyl-tRNA molecules trapped in stalled 50S ribosomal subunits, and thus maintains levels of free tRNAs and 50S ribosomes. The polypeptide is Peptidyl-tRNA hydrolase (Azotobacter vinelandii (strain DJ / ATCC BAA-1303)).